The primary structure comprises 210 residues: Orotate phosphoribosyltransferase (210 aa).

Residues Arg-97, Lys-101, His-103, and 123–131 contribute to the 5-phospho-alpha-D-ribose 1-diphosphate site; that span reads EDLISTGGS. Orotate is bound at residue Ser-127.

It belongs to the purine/pyrimidine phosphoribosyltransferase family. PyrE subfamily. In terms of assembly, homodimer. Mg(2+) serves as cofactor.

It catalyses the reaction orotidine 5'-phosphate + diphosphate = orotate + 5-phospho-alpha-D-ribose 1-diphosphate. The protein operates within pyrimidine metabolism; UMP biosynthesis via de novo pathway; UMP from orotate: step 1/2. In terms of biological role, catalyzes the transfer of a ribosyl phosphate group from 5-phosphoribose 1-diphosphate to orotate, leading to the formation of orotidine monophosphate (OMP). The chain is Orotate phosphoribosyltransferase from Enterococcus faecalis (strain ATCC 700802 / V583).